A 208-amino-acid polypeptide reads, in one-letter code: Peroxiredoxin (208 aa).

The Thioredoxin domain occupies 2–156 (PLLGDDFPQL…IVRAVKALQT (155 aa)). Residue Cys44 is the Cysteine sulfenic acid (-SOH) intermediate of the active site. A substrate-binding site is contributed by Arg119.

This sequence belongs to the peroxiredoxin family. Prx6 subfamily. As to quaternary structure, homodecamer. Pentamer of dimers that assemble into a ring structure.

The protein localises to the cytoplasm. It carries out the reaction a hydroperoxide + [thioredoxin]-dithiol = an alcohol + [thioredoxin]-disulfide + H2O. In terms of biological role, thiol-specific peroxidase that catalyzes the reduction of hydrogen peroxide and organic hydroperoxides to water and alcohols, respectively. Plays a role in cell protection against oxidative stress by detoxifying peroxides. The protein is Peroxiredoxin of Treponema denticola (strain ATCC 35405 / DSM 14222 / CIP 103919 / JCM 8153 / KCTC 15104).